A 66-amino-acid polypeptide reads, in one-letter code: Cold shock protein 1 (66 aa).

In terms of domain architecture, CSD spans 4–63 (GTVKWFNADKGYGFITGEDGNDVFVHFSAIQTDGFKTLEEGQKVTFDEESSDRGPQAANV). The tract at residues 47 to 66 (VTFDEESSDRGPQAANVVPQ) is disordered.

The protein resides in the cytoplasm. This is Cold shock protein 1 (csp) from Lactiplantibacillus plantarum (strain ATCC BAA-793 / NCIMB 8826 / WCFS1) (Lactobacillus plantarum).